The chain runs to 472 residues: 3-isopropylmalate dehydratase large subunit (472 aa).

The [4Fe-4S] cluster site is built by Cys352, Cys413, and Cys416.

This sequence belongs to the aconitase/IPM isomerase family. LeuC type 1 subfamily. Heterodimer of LeuC and LeuD. [4Fe-4S] cluster is required as a cofactor.

It catalyses the reaction (2R,3S)-3-isopropylmalate = (2S)-2-isopropylmalate. It participates in amino-acid biosynthesis; L-leucine biosynthesis; L-leucine from 3-methyl-2-oxobutanoate: step 2/4. Catalyzes the isomerization between 2-isopropylmalate and 3-isopropylmalate, via the formation of 2-isopropylmaleate. This Pseudomonas fluorescens (strain ATCC BAA-477 / NRRL B-23932 / Pf-5) protein is 3-isopropylmalate dehydratase large subunit.